The following is a 563-amino-acid chain: Tripeptidyl-peptidase 1 (563 aa).

Residues 1–19 (MRLRTCLLGLLALCVASKC) form the signal peptide. A propeptide spans 20 to 195 (SYSPEPDQQR…PEPQVSGTVG (176 aa)) (removed in mature form). An intrachain disulfide couples cysteine 111 to cysteine 122. In terms of domain architecture, Peptidase S53 spans 199 to 563 (GVTPSVIRQR…PALLKALIKP (365 aa)). Asparagine 210 and asparagine 222 each carry an N-linked (GlcNAc...) asparagine glycan. Residues glutamate 272 and aspartate 276 each act as charge relay system in the active site. Asparagine 286, asparagine 313, and asparagine 443 each carry an N-linked (GlcNAc...) asparagine glycan. Cystine bridges form between cysteine 365-cysteine 526 and cysteine 522-cysteine 537. Residue serine 475 is the Charge relay system of the active site. Residues aspartate 517 and valine 518 each coordinate Ca(2+). The Ca(2+) site is built by glycine 539, glycine 541, and aspartate 543.

In terms of assembly, monomer. Interacts with CLN5. Interacts with CLN3. The cofactor is Ca(2+). Activated by autocatalytic proteolytical processing upon acidification. N-glycosylation is required for processing and activity.

The protein resides in the lysosome. It localises to the melanosome. It carries out the reaction Release of an N-terminal tripeptide from a polypeptide, but also has endopeptidase activity.. In terms of biological role, lysosomal serine protease with tripeptidyl-peptidase I activity. May act as a non-specific lysosomal peptidase which generates tripeptides from the breakdown products produced by lysosomal proteinases. Requires substrates with an unsubstituted N-terminus. This Canis lupus familiaris (Dog) protein is Tripeptidyl-peptidase 1 (TPP1).